We begin with the raw amino-acid sequence, 299 residues long: 4-diphosphocytidyl-2-C-methyl-D-erythritol kinase (299 aa).

Lys18 is an active-site residue. 104–114 (PIASGIGGGSS) lines the ATP pocket. Asp146 is a catalytic residue.

Belongs to the GHMP kinase family. IspE subfamily.

The catalysed reaction is 4-CDP-2-C-methyl-D-erythritol + ATP = 4-CDP-2-C-methyl-D-erythritol 2-phosphate + ADP + H(+). It participates in isoprenoid biosynthesis; isopentenyl diphosphate biosynthesis via DXP pathway; isopentenyl diphosphate from 1-deoxy-D-xylulose 5-phosphate: step 3/6. Functionally, catalyzes the phosphorylation of the position 2 hydroxy group of 4-diphosphocytidyl-2C-methyl-D-erythritol. In Brucella abortus biovar 1 (strain 9-941), this protein is 4-diphosphocytidyl-2-C-methyl-D-erythritol kinase.